The primary structure comprises 909 residues: E3 ubiquitin-protein ligase HACE1 (909 aa).

An N-terminal helix important for homodimerization region spans residues M1–V21. ANK repeat units follow at residues L23–F55, V64–Y93, S97–I126, E130–V159, M163–R192, S196–D226, and N228–P253. Residues K396–G433 form a disordered region. In terms of domain architecture, HECT spans N574–A909. The Glycyl thioester intermediate role is filled by C876.

As to quaternary structure, homodimer. The homodimer is autoinhibited and stabilized by its N-terminal helix. Interacts with RAB1 (RAB1A, RAB1B or RAB1C), RAB4 (RAB4A or RAB4B) and RAB11 (RAB11A or RAB11B); in a GTP-dependent manner. Interacts with the 26S proteasomal complex through the 20S core proteasomal subunit. Interacts with RARB. Autoubiquitinated.

The protein resides in the golgi apparatus. It is found in the golgi stack membrane. It localises to the cytoplasm. The protein localises to the endoplasmic reticulum. The catalysed reaction is S-ubiquitinyl-[E2 ubiquitin-conjugating enzyme]-L-cysteine + [acceptor protein]-L-lysine = [E2 ubiquitin-conjugating enzyme]-L-cysteine + N(6)-ubiquitinyl-[acceptor protein]-L-lysine.. Its pathway is protein modification; protein ubiquitination. Its function is as follows. E3 ubiquitin-protein ligase involved in Golgi membrane fusion and regulation of small GTPases. Acts as a regulator of Golgi membrane dynamics during the cell cycle: recruited to Golgi membrane by Rab proteins and regulates postmitotic Golgi membrane fusion. Acts by mediating ubiquitination during mitotic Golgi disassembly, ubiquitination serving as a signal for Golgi reassembly later, after cell division. Specifically binds GTP-bound RAC1, mediating ubiquitination and subsequent degradation of active RAC1, thereby playing a role in host defense against pathogens. May also act as a transcription regulator via its interaction with RARB. This chain is E3 ubiquitin-protein ligase HACE1 (HACE1), found in Bos taurus (Bovine).